A 279-amino-acid polypeptide reads, in one-letter code: Peptide deformylase 1B, chloroplastic (279 aa).

Residues Cys-177 and His-219 each coordinate Fe cation. The active site involves Glu-220. His-223 is a binding site for Fe cation.

This sequence belongs to the polypeptide deformylase family. It depends on Fe(2+) as a cofactor.

It is found in the plastid. The protein resides in the chloroplast. It carries out the reaction N-terminal N-formyl-L-methionyl-[peptide] + H2O = N-terminal L-methionyl-[peptide] + formate. Functionally, removes the formyl group from the N-terminal Met of newly synthesized proteins. This is Peptide deformylase 1B, chloroplastic (PDF1B) from Solanum lycopersicum (Tomato).